Consider the following 732-residue polypeptide: Elongation factor 2 (732 aa).

Residues 19 to 260 enclose the tr-type G domain; it reads ERIRNMGIAA…MVVRHLPNPL (242 aa). Residues 28 to 35, 94 to 98, and 148 to 151 each bind GTP; these read AHIDHGKT, DTPGH, and NKVD. The residue at position 597 (H597) is a Diphthamide.

This sequence belongs to the TRAFAC class translation factor GTPase superfamily. Classic translation factor GTPase family. EF-G/EF-2 subfamily.

The protein localises to the cytoplasm. In terms of biological role, catalyzes the GTP-dependent ribosomal translocation step during translation elongation. During this step, the ribosome changes from the pre-translocational (PRE) to the post-translocational (POST) state as the newly formed A-site-bound peptidyl-tRNA and P-site-bound deacylated tRNA move to the P and E sites, respectively. Catalyzes the coordinated movement of the two tRNA molecules, the mRNA and conformational changes in the ribosome. This chain is Elongation factor 2, found in Thermococcus onnurineus (strain NA1).